The sequence spans 476 residues: Probable serine carboxypeptidase CPVL (476 aa).

A signal peptide spans 1–22 (MVGAMWKVIVSLVLLMPGPCDG). N-linked (GlcNAc...) asparagine glycosylation is found at Asn-81 and Asn-132. The active site involves Ser-204. Asn-307 and Asn-346 each carry an N-linked (GlcNAc...) asparagine glycan. Residues Asp-388 and His-448 contribute to the active site.

This sequence belongs to the peptidase S10 family. Expressed in macrophages but not in other leukocytes. Abundantly expressed in heart and kidney. Also expressed in spleen, leukocytes, and placenta.

Its function is as follows. May be involved in the digestion of phagocytosed particles in the lysosome, participation in an inflammatory protease cascade, and trimming of peptides for antigen presentation. The polypeptide is Probable serine carboxypeptidase CPVL (CPVL) (Homo sapiens (Human)).